A 1365-amino-acid chain; its full sequence is DNA-directed RNA polymerase subunit beta' (1365 aa).

The Zn(2+) site is built by Cys249, Cys316, Cys323, and Cys326.

The protein belongs to the RNA polymerase beta' chain family. RpoC2 subfamily. As to quaternary structure, in cyanobacteria the RNAP catalytic core is composed of 2 alpha, 1 beta, 1 beta', 1 gamma and 1 omega subunit. When a sigma factor is associated with the core the holoenzyme is formed, which can initiate transcription. The cofactor is Zn(2+).

It carries out the reaction RNA(n) + a ribonucleoside 5'-triphosphate = RNA(n+1) + diphosphate. In terms of biological role, DNA-dependent RNA polymerase catalyzes the transcription of DNA into RNA using the four ribonucleoside triphosphates as substrates. In Synechococcus sp. (strain CC9311), this protein is DNA-directed RNA polymerase subunit beta'.